A 233-amino-acid polypeptide reads, in one-letter code: MNTNADPAEVQKFSDLAHRWWDPASEFKPLHEINPLRLDWIDGHCGLAGKKVLDVGCGGGLLSEGMAQRGAEVSGIDLSEKALGVARLHLYESGLQVDYQLTSAEAHAATHPAQFDVVTCMEMLEHVPNPESTVHACAQMAKPGGAVFFSTLNRNFKAYLFAVVGAEYLLNLLPRGTHDYAKFIKPSELSRYCRNAGLELVSLSGMTYNPITKVYALSRDTDVNYMVHARKLG.

S-adenosyl-L-methionine is bound by residues Arg37, Gly56, Asp77, and Met121.

The protein belongs to the methyltransferase superfamily. UbiG/COQ3 family.

It catalyses the reaction a 3-demethylubiquinol + S-adenosyl-L-methionine = a ubiquinol + S-adenosyl-L-homocysteine + H(+). It carries out the reaction a 3-(all-trans-polyprenyl)benzene-1,2-diol + S-adenosyl-L-methionine = a 2-methoxy-6-(all-trans-polyprenyl)phenol + S-adenosyl-L-homocysteine + H(+). The protein operates within cofactor biosynthesis; ubiquinone biosynthesis. O-methyltransferase that catalyzes the 2 O-methylation steps in the ubiquinone biosynthetic pathway. The protein is Ubiquinone biosynthesis O-methyltransferase of Azoarcus sp. (strain BH72).